Here is a 332-residue protein sequence, read N- to C-terminus: D-glutamate N-acetyltransferase (332 aa).

It belongs to the N-acetyltransferase DgcN family.

It carries out the reaction D-glutamate + acetyl-CoA = N-acetyl-D-glutamate + CoA + H(+). The catalysed reaction is D-aspartate + acetyl-CoA = N-acetyl-D-aspartate + CoA + H(+). It catalyses the reaction D-glutamine + acetyl-CoA = N-acetyl-D-glutamine + CoA + H(+). It participates in amino-acid degradation. Its function is as follows. N-acetyltransferase involved in a deamination-independent D-glutamate degradation pathway, named the DgcN-DgcA pathway. Catalyzes the transfer of the acetyl moiety from acetyl-CoA to D-glutamate to generate N-acetyl-D-glutamate. Can also acetylate D-aspartate and D-glutamine, with lower efficiency. Has low activity with D-asparagine. Cannot use succinyl-CoA. This Pseudoalteromonas sp protein is D-glutamate N-acetyltransferase.